The following is a 151-amino-acid chain: Nascent polypeptide-associated complex subunit beta (151 aa).

Residues 32–97 (EQDDTKLMEA…PQEKDVTQLI (66 aa)) enclose the NAC-A/B domain. The tract at residues 122 to 151 (GKTPSMGGENAGADEDIPDLIEGQKFDEVE) is disordered.

Belongs to the NAC-beta family. Part of the nascent polypeptide-associated complex (NAC), consisting of EGD2 and EGD1. NAC associates with ribosomes via EGD1.

The protein resides in the cytoplasm. The protein localises to the nucleus. In terms of biological role, component of the nascent polypeptide-associated complex (NAC), a dynamic component of the ribosomal exit tunnel, protecting the emerging polypeptides from interaction with other cytoplasmic proteins to ensure appropriate nascent protein targeting. The NAC complex also promotes mitochondrial protein import by enhancing productive ribosome interactions with the outer mitochondrial membrane and blocks the inappropriate interaction of ribosomes translating non-secretory nascent polypeptides with translocation sites in the membrane of the endoplasmic reticulum. EGD1 may act as a transcription factor that exert a negative effect on the expression of several genes that are transcribed by RNA polymerase II. In Meyerozyma guilliermondii (strain ATCC 6260 / CBS 566 / DSM 6381 / JCM 1539 / NBRC 10279 / NRRL Y-324) (Yeast), this protein is Nascent polypeptide-associated complex subunit beta (EGD1).